The chain runs to 1032 residues: Exo-beta-D-glucosaminidase (1032 aa).

An N-terminal signal peptide occupies residues 1–32 (MSFRQKRTRIPLLAMTVTALAAAVCGVTTAPA). Positions 33–46 (ATGAEVAVPLSVGA) are excised as a propeptide. Asp-469 acts as the Proton donor in catalysis. Glu-541 functions as the Nucleophile in the catalytic mechanism. The interval 883–908 (SVRISGWNTGTQTVPADGSGPGPSDP) is disordered. In terms of domain architecture, CBM6 spans 909–1032 (VDYQAEDATI…GGPNVDKITL (124 aa)).

This sequence belongs to the glycosyl hydrolase 2 family. Monomer.

The protein localises to the secreted. It carries out the reaction Hydrolysis of chitosan or chitosan oligosaccharides to remove successive D-glucosamine residues from the non-reducing termini.. Hydrolyzes chitosan and chitooligosaccharides with retention of anomeric configuration. Has maximum activity on chitotetraose, chitopentaose and their corresponding alcohols, with a slight decrease in the rate of hydrolysis on longer chains. Has no activity against beta-D-glucopyranoside, beta-D-xylopyranoside, beta-D-mannoside, beta-D-glucuronide, beta-D-galactoside, beta-D-N-acetylgalactosamide, beta-D-N-acetylglucosaminide and alpha-D-N-acetylglucosaminide. The chain is Exo-beta-D-glucosaminidase from Amycolatopsis orientalis (Nocardia orientalis).